The primary structure comprises 777 residues: Biotin sulfoxide reductase (777 aa).

Ser-148 serves as a coordination point for Mo-bis(molybdopterin guanine dinucleotide).

It belongs to the prokaryotic molybdopterin-containing oxidoreductase family. Mo-bis(molybdopterin guanine dinucleotide) serves as cofactor.

The catalysed reaction is [thioredoxin]-disulfide + L-methionine + H2O = L-methionine (S)-S-oxide + [thioredoxin]-dithiol. This enzyme may serve as a scavenger, allowing the cell to utilize biotin sulfoxide as a biotin source. It reduces a spontaneous oxidation product of biotin, D-biotin D-sulfoxide (BSO or BDS), back to biotin. Also exhibits methionine-(S)-sulfoxide (Met-S-SO) reductase activity, acting specifically on the (S) enantiomer in the free, but not the protein-bound form. It thus plays a role in assimilation of oxidized methionines. This is Biotin sulfoxide reductase (bisC) from Escherichia coli (strain K12).